The following is a 312-amino-acid chain: Tetraacyldisaccharide 4'-kinase (312 aa).

60–67 (IAGGSGKT) provides a ligand contact to ATP.

The protein belongs to the LpxK family.

The enzyme catalyses a lipid A disaccharide + ATP = a lipid IVA + ADP + H(+). The protein operates within glycolipid biosynthesis; lipid IV(A) biosynthesis; lipid IV(A) from (3R)-3-hydroxytetradecanoyl-[acyl-carrier-protein] and UDP-N-acetyl-alpha-D-glucosamine: step 6/6. Its function is as follows. Transfers the gamma-phosphate of ATP to the 4'-position of a tetraacyldisaccharide 1-phosphate intermediate (termed DS-1-P) to form tetraacyldisaccharide 1,4'-bis-phosphate (lipid IVA). The sequence is that of Tetraacyldisaccharide 4'-kinase from Helicobacter acinonychis (strain Sheeba).